Consider the following 616-residue polypeptide: Hemagglutinin-neuraminidase (616 aa).

At 1-26 the chain is on the intravirion side; sequence MDRAVSQVALENDEREAKNTWRLVFR. Residues 27–47 form a helical membrane-spanning segment; the sequence is IAILLLTVVTLAISAAALAYS. Topologically, residues 48-616 are virion surface; the sequence is MEASTPSDLI…ELESYAASWP (569 aa). A glycan (N-linked (GlcNAc...) asparagine; by host) is linked at asparagine 119. Residues 124-152 are important for interaction with fusion/F protein; it reads GAPIHDPDYIGGIGKELIVDDASDVTSFY. 3 disulfides stabilise this stretch: cysteine 172-cysteine 196, cysteine 186-cysteine 247, and cysteine 238-cysteine 251. The interval 234-239 is involved in neuraminidase activity; sequence NRKSCS. 2 N-linked (GlcNAc...) asparagine; by host glycosylation sites follow: asparagine 341 and asparagine 433. 2 disulfide bridges follow: cysteine 344-cysteine 461 and cysteine 455-cysteine 465. Residues asparagine 481, asparagine 538, and asparagine 600 are each glycosylated (N-linked (GlcNAc...) asparagine; by host). A disulfide bridge links cysteine 531 with cysteine 542.

It belongs to the paramyxoviruses hemagglutinin-neuraminidase family. Homotetramer; composed of disulfide-linked homodimers. Interacts with F protein trimer. Interacts with host CG-1B; this interaction inhibits viral adsorption and replication rather than internalization.

It localises to the virion membrane. The protein localises to the host cell membrane. It catalyses the reaction Hydrolysis of alpha-(2-&gt;3)-, alpha-(2-&gt;6)-, alpha-(2-&gt;8)- glycosidic linkages of terminal sialic acid residues in oligosaccharides, glycoproteins, glycolipids, colominic acid and synthetic substrates.. In terms of biological role, mediates the viral entry into the host cell together with fusion/F protein. Attaches the virus to sialic acid-containing cell receptors and thereby initiates infection. Binding of HN protein to the receptor induces a conformational change that allows the F protein to trigger virion/cell membranes fusion. Its function is as follows. Neuraminidase activity ensures the efficient spread of the virus by dissociating the mature virions from the neuraminic acid containing glycoproteins. The sequence is that of Hemagglutinin-neuraminidase (HN) from Newcastle disease virus (strain Chicken/Northern Ireland/Ulster/67) (NDV).